A 239-amino-acid polypeptide reads, in one-letter code: DNA repair protein RecO (239 aa).

The protein belongs to the RecO family.

Functionally, involved in DNA repair and RecF pathway recombination. The protein is DNA repair protein RecO of Stenotrophomonas maltophilia (strain K279a).